The following is a 427-amino-acid chain: Gamma-glutamyl phosphate reductase (427 aa).

This sequence belongs to the gamma-glutamyl phosphate reductase family.

Its subcellular location is the cytoplasm. It catalyses the reaction L-glutamate 5-semialdehyde + phosphate + NADP(+) = L-glutamyl 5-phosphate + NADPH + H(+). The protein operates within amino-acid biosynthesis; L-proline biosynthesis; L-glutamate 5-semialdehyde from L-glutamate: step 2/2. Catalyzes the NADPH-dependent reduction of L-glutamate 5-phosphate into L-glutamate 5-semialdehyde and phosphate. The product spontaneously undergoes cyclization to form 1-pyrroline-5-carboxylate. The polypeptide is Gamma-glutamyl phosphate reductase (Allorhizobium ampelinum (strain ATCC BAA-846 / DSM 112012 / S4) (Agrobacterium vitis (strain S4))).